The primary structure comprises 109 residues: Period circadian protein (109 aa).

Polar residues-rich tracts occupy residues 42-56 and 68-80; these read QSYS…NLSP and SSRN…NLNM. Residues 42–109 form a disordered region; sequence QSYSTPANTG…LVTLTESLLK (68 aa). A compositionally biased stretch (low complexity) spans 81 to 97; sequence GSVTNTSNTGTGTSSGS.

As to quaternary structure, forms a heterodimer with timeless (TIM); the complex then translocates into the nucleus. In terms of processing, phosphorylated with a circadian rhythmicity, probably by the double-time protein (dbt). Phosphorylation could be implicated in the stability of per monomer and in the formation of heterodimer per-tim.

It is found in the nucleus. The protein resides in the cytoplasm. Its subcellular location is the perinuclear region. Essential for biological clock functions. Determines the period length of circadian and ultradian rhythms; an increase in PER dosage leads to shortened circadian rhythms and a decrease leads to lengthened circadian rhythms. Essential for the circadian rhythmicity of locomotor activity, eclosion behavior, and for the rhythmic component of the male courtship song that originates in the thoracic nervous system. The biological cycle depends on the rhythmic formation and nuclear localization of the TIM-PER complex. Light induces the degradation of TIM, which promotes elimination of PER. Nuclear activity of the heterodimer coordinatively regulates PER and TIM transcription through a negative feedback loop. Behaves as a negative element in circadian transcriptional loop. Does not appear to bind DNA, suggesting indirect transcriptional inhibition. The protein is Period circadian protein (per) of Musca domestica (House fly).